The following is a 642-amino-acid chain: Threonine--tRNA ligase (642 aa).

Positions 1–61 constitute a TGS domain; that stretch reads MPIITLPDGS…EEDASLEIIT (61 aa). The interval 244–535 is catalytic; it reads DHRKIGKQLD…LIEEYAGFFP (292 aa). Zn(2+)-binding residues include cysteine 335, histidine 386, and histidine 512.

It belongs to the class-II aminoacyl-tRNA synthetase family. Homodimer. The cofactor is Zn(2+).

The protein resides in the cytoplasm. It catalyses the reaction tRNA(Thr) + L-threonine + ATP = L-threonyl-tRNA(Thr) + AMP + diphosphate + H(+). Its function is as follows. Catalyzes the attachment of threonine to tRNA(Thr) in a two-step reaction: L-threonine is first activated by ATP to form Thr-AMP and then transferred to the acceptor end of tRNA(Thr). Also edits incorrectly charged L-seryl-tRNA(Thr). The protein is Threonine--tRNA ligase of Vibrio vulnificus (strain CMCP6).